Here is a 142-residue protein sequence, read N- to C-terminus: Large ribosomal subunit protein bL17 (142 aa).

Belongs to the bacterial ribosomal protein bL17 family. In terms of assembly, part of the 50S ribosomal subunit. Contacts protein L32.

The chain is Large ribosomal subunit protein bL17 from Bartonella henselae (strain ATCC 49882 / DSM 28221 / CCUG 30454 / Houston 1) (Rochalimaea henselae).